The sequence spans 383 residues: tRNA-specific 2-thiouridylase MnmA (383 aa).

Residues 6–13 (AMSGGVDS) and Leu-32 contribute to the ATP site. The active-site Nucleophile is Cys-101. The cysteines at positions 101 and 199 are disulfide-linked. Gly-125 is a binding site for ATP. Residues 148–150 (KDQ) form an interaction with tRNA region. The active-site Cysteine persulfide intermediate is the Cys-199.

The protein belongs to the MnmA/TRMU family.

It localises to the cytoplasm. It catalyses the reaction S-sulfanyl-L-cysteinyl-[protein] + uridine(34) in tRNA + AH2 + ATP = 2-thiouridine(34) in tRNA + L-cysteinyl-[protein] + A + AMP + diphosphate + H(+). Functionally, catalyzes the 2-thiolation of uridine at the wobble position (U34) of tRNA, leading to the formation of s(2)U34. In Kocuria rhizophila (strain ATCC 9341 / DSM 348 / NBRC 103217 / DC2201), this protein is tRNA-specific 2-thiouridylase MnmA.